Reading from the N-terminus, the 481-residue chain is 1-acylglycerol-3-phosphate O-acyltransferase PNPLA3 (481 aa).

Over 1 to 41 the chain is Cytoplasmic; sequence MYDAERGWSLSFAGCGFLGFYHVGATRCLSEHAPHLLRDAR. Positions 10–179 constitute a PNPLA domain; the sequence is LSFAGCGFLG…SDNVPFIDAK (170 aa). The GXGXXG signature appears at 14 to 19; the sequence is GCGFLG. Residues 42–62 form a helical; Signal-anchor for type II membrane protein membrane-spanning segment; the sequence is MLFGASAGALHCVGVLSGIPL. The GXSXG signature appears at 45-49; sequence GASAG. Catalysis depends on serine 47, which acts as the Nucleophile. Residues 63-481 lie on the Lumenal side of the membrane; the sequence is EQTLQVLSDL…FPSFSLEKSL (419 aa). An N-linked (GlcNAc...) asparagine glycan is attached at asparagine 89. Aspartate 166 acts as the Proton acceptor in catalysis. Residues 166-168 carry the DGA/G motif; the sequence is DGG. An N-linked (GlcNAc...) asparagine glycan is attached at asparagine 280.

The protein resides in the membrane. Its subcellular location is the lipid droplet. The catalysed reaction is a 1-acyl-sn-glycero-3-phosphate + an acyl-CoA = a 1,2-diacyl-sn-glycero-3-phosphate + CoA. The enzyme catalyses a triacylglycerol + H2O = a diacylglycerol + a fatty acid + H(+). It catalyses the reaction a 1-acylglycerol + a 1,3-diacylglycerol = a triacylglycerol + glycerol. It carries out the reaction a 1-acylglycerol + a 1,2-diacylglycerol = a triacylglycerol + glycerol. The catalysed reaction is 2 a 1-acylglycerol = a 1,2-diacylglycerol + glycerol. The enzyme catalyses 1-(9Z-octadecenoyl)-sn-glycero-3-phosphate + (9Z)-octadecenoyl-CoA = 1,2-di-(9Z-octadecenoyl)-sn-glycero-3-phosphate + CoA. It catalyses the reaction 1-(9Z-octadecenoyl)-sn-glycero-3-phosphate + hexadecanoyl-CoA = 1-(9Z)-octadecenoyl-2-hexadecanoyl-sn-glycero-3-phosphate + CoA. It carries out the reaction 1-(9Z-octadecenoyl)-sn-glycero-3-phosphate + (9Z,12Z)-octadecadienoyl-CoA = 1-(9Z)-octadecenoyl-2-(9Z,12Z)-octadecadienoyl-sn-glycero-3-phosphate + CoA. The catalysed reaction is 1-(9Z-octadecenoyl)-sn-glycero-3-phosphate + (5Z,8Z,11Z,14Z)-eicosatetraenoyl-CoA = 1-(9Z)-octadecenoyl-2-(5Z,8Z,11Z,14Z)-eicosatetraenoyl-sn-glycero-3-phosphate + CoA. The enzyme catalyses 2 1-(9Z-octadecenoyl)-glycerol = 1,2-di-(9Z-octadecenoyl)-glycerol + glycerol. It catalyses the reaction 1-(9Z-octadecenoyl)-glycerol + 1,2-di-(9Z-octadecenoyl)-glycerol = 1,2,3-tri-(9Z-octadecenoyl)-glycerol + glycerol. It carries out the reaction 1-(9Z-octadecenoyl)-glycerol + 1,3-di-(9Z-octadecenoyl)-glycerol = 1,2,3-tri-(9Z-octadecenoyl)-glycerol + glycerol. The catalysed reaction is 1,2,3-tri-(9Z-octadecenoyl)-glycerol + H2O = 1,3-di-(9Z-octadecenoyl)-glycerol + (9Z)-octadecenoate + H(+). The enzyme catalyses a 1,2-diacyl-sn-glycero-3-phosphocholine + H2O = a 1-acyl-sn-glycero-3-phosphocholine + a fatty acid + H(+). It functions in the pathway phospholipid metabolism. The protein operates within glycerolipid metabolism. Its activity is regulated as follows. The triglyceride lipase activity is inhibited by BEL ((E)-6-(bromomethylene)-3-(1-naphthalenyl)-2H-tetrahydropyran-2-one), a suicide substrate inhibitor. Its function is as follows. Specifically catalyzes coenzyme A (CoA)-dependent acylation of 1-acyl-sn-glycerol 3-phosphate (2-lysophosphatidic acid/LPA) to generate phosphatidic acid (PA), an important metabolic intermediate and precursor for both triglycerides and glycerophospholipids. Does not esterify other lysophospholipids. Acyl donors are long chain (at least C16) fatty acyl-CoAs: arachidonoyl-CoA, linoleoyl-CoA, oleoyl-CoA and at a lesser extent palmitoyl-CoA. Additionally possesses low triacylglycerol lipase and CoA-independent acylglycerol transacylase activities and thus may play a role in acyl-chain remodeling of triglycerides. In vitro may express hydrolytic activity against glycerolipids triacylglycerol, diacylglycerol and monoacylglycerol, with a strong preference for oleic acid as the acyl moiety. However, the triacylglycerol hydrolase activity is controversial and may be very low. Possesses phospholipase A2 activity. The protein is 1-acylglycerol-3-phosphate O-acyltransferase PNPLA3 of Homo sapiens (Human).